Reading from the N-terminus, the 219-residue chain is Probable transaldolase (219 aa).

Catalysis depends on lysine 83, which acts as the Schiff-base intermediate with substrate.

The protein belongs to the transaldolase family. Type 3B subfamily.

The protein resides in the cytoplasm. It carries out the reaction D-sedoheptulose 7-phosphate + D-glyceraldehyde 3-phosphate = D-erythrose 4-phosphate + beta-D-fructose 6-phosphate. It participates in carbohydrate degradation; pentose phosphate pathway; D-glyceraldehyde 3-phosphate and beta-D-fructose 6-phosphate from D-ribose 5-phosphate and D-xylulose 5-phosphate (non-oxidative stage): step 2/3. In terms of biological role, transaldolase is important for the balance of metabolites in the pentose-phosphate pathway. This Cereibacter sphaeroides (strain ATCC 17025 / ATH 2.4.3) (Rhodobacter sphaeroides) protein is Probable transaldolase.